We begin with the raw amino-acid sequence, 409 residues long: Ubiquitin-associated domain-containing protein 1 (409 aa).

Residue Met-1 is modified to N-acetylmethionine. In terms of domain architecture, Ubiquitin-like spans 14-98; it reads LRLHICAADG…LLLIKKRVPS (85 aa). Residues 101–122 are disordered; it reads PKMADVSAEEKKKQEQKAPDKD. Residues 108–122 show a composition bias toward basic and acidic residues; sequence AEEKKKQEQKAPDKD. The region spanning 187–231 is the UBA 1 domain; the sequence is DEDERVDETALRQLTEMGFPESRASKALRLNHMSVPQAMEWLIEH. The segment at 239 to 273 is disordered; it reads TPLPGHAAQAGASAAATTSSTSSEAAVGTSVEDEE. Residues 245–268 show a composition bias toward low complexity; the sequence is AAQAGASAAATTSSTSSEAAVGTS. Residues 292-332 form the UBA 2 domain; that stretch reads RADARAVISLMEMGFDEKEVIDALRVNNNQQNAACEWLLGD. One can recognise an STI1 domain in the interval 357-396; the sequence is NPVVQLGLTNPKTLLAFEDMLENPLNSTQWMNDPETGPVM.

In terms of assembly, component of the KPC complex composed of RNF123/KPC1 and UBAC1/KPC2. Interacts (via ubiquitin-like domain) with RNF123. Interacts (via ubiquitin-like and UBA domains) with the proteasome via its N-terminal domain.

The protein localises to the cytoplasm. It functions in the pathway protein modification; protein ubiquitination. Functionally, non-catalytic component of the KPC complex, a E3 ubiquitin-protein ligase complex that mediates polyubiquitination of target proteins, such as CDKN1B and NFKB1. The KPC complex catalyzes polyubiquitination and proteasome-mediated degradation of CDKN1B during G1 phase of the cell cycle. The KPC complex also acts as a key regulator of the NF-kappa-B signaling by promoting maturation of the NFKB1 component of NF-kappa-B by catalyzing ubiquitination of the NFKB1 p105 precursor. Within the KPC complex, UBAC1 acts as an adapter that promotes the transfer of target proteins that have been polyubiquitinated by RNF123/KPC1 to the 26S proteasome. This Mus musculus (Mouse) protein is Ubiquitin-associated domain-containing protein 1 (Ubac1).